Reading from the N-terminus, the 338-residue chain is Ribosomal RNA large subunit methyltransferase F (338 aa).

Residues 1–21 (MTQKKNKPTQKKKGLHPRNPH) are disordered.

This sequence belongs to the methyltransferase superfamily. METTL16/RlmF family.

Its subcellular location is the cytoplasm. It catalyses the reaction adenosine(1618) in 23S rRNA + S-adenosyl-L-methionine = N(6)-methyladenosine(1618) in 23S rRNA + S-adenosyl-L-homocysteine + H(+). Specifically methylates the adenine in position 1618 of 23S rRNA. The protein is Ribosomal RNA large subunit methyltransferase F of Photobacterium profundum (strain SS9).